A 39-amino-acid chain; its full sequence is Photosystem II reaction center protein Y (39 aa).

A helical transmembrane segment spans residues Val5–Ile23.

It belongs to the PsbY family. In terms of assembly, PSII is composed of 1 copy each of membrane proteins PsbA, PsbB, PsbC, PsbD, PsbE, PsbF, PsbH, PsbI, PsbJ, PsbK, PsbL, PsbM, PsbT, PsbX, PsbY, PsbZ, Psb30/Ycf12, peripheral proteins PsbO, CyanoQ (PsbQ), PsbU, PsbV and a large number of cofactors. It forms dimeric complexes.

The protein resides in the cellular thylakoid membrane. Its function is as follows. Loosely associated component of the core of photosystem II (PSII), it is not always seen in crystals. PSII is a light-driven water plastoquinone oxidoreductase, using light energy to abstract electrons from H(2)O, generating a proton gradient subsequently used for ATP formation. The protein is Photosystem II reaction center protein Y of Rippkaea orientalis (strain PCC 8801 / RF-1) (Cyanothece sp. (strain PCC 8801)).